The primary structure comprises 174 residues: B3 domain-containing protein At2g31862 (174 aa).

Positions M1–D71 form a DNA-binding region, TF-B3.

The protein resides in the nucleus. In Arabidopsis thaliana (Mouse-ear cress), this protein is B3 domain-containing protein At2g31862.